A 29-amino-acid chain; its full sequence is Ceratotoxin-B (29 aa).

As to quaternary structure, homomer of four to six subunits.

The protein resides in the secreted. In terms of biological role, female-specific peptides with potent activity against Gram-positive and Gram-negative bacteria. They have as well hemolytic activity. The protein is Ceratotoxin-B (CTXB) of Ceratitis capitata (Mediterranean fruit fly).